Reading from the N-terminus, the 474-residue chain is Microtubule protein alp7 (474 aa).

The span at 1 to 20 (MSDIVSSSTDYSRRSPSSSS) shows a compositional bias: low complexity. 3 disordered regions span residues 1–79 (MSDI…DTLN), 93–114 (KSFDFSGTPRPMHPISHPLSQH), and 164–223 (SLQT…NSTQ). A Phosphoserine modification is found at S17. The span at 25–36 (ETDHTGFHEKRQ) shows a compositional bias: basic and acidic residues. The segment covering 66–76 (SKPNPQLNLKD) has biased composition (polar residues). 2 stretches are compositionally biased toward polar residues: residues 177-189 (SNGSFPRQTNTAP) and 201-223 (RNSATPSTSQADIPTQYPINSTQ). Coiled-coil stretches lie at residues 219–273 (INST…QLRS) and 367–471 (KISN…LNLE).

In terms of assembly, interacts with alp14.

The protein resides in the nucleus. It localises to the cytoplasm. It is found in the cytoskeleton. Its subcellular location is the spindle. The protein localises to the chromosome. The protein resides in the centromere. It localises to the kinetochore. Functionally, required for bipolar spindle formation and proper chromosome segregation. Has an indirect role in connecting the kinetochores and the plus end of pole to chromosome microtubules by targeting alp14 to the spindle pole body. Involved in the emergence of large microtubule organizing centers (MTOC) in interphase cells. Attaches to the minus ends of microtubules and associates with the sites of microtubule attachment on the nuclear envelope. This leads to the stabilization of the microtubule bundles. The sequence is that of Microtubule protein alp7 (alp7) from Schizosaccharomyces pombe (strain 972 / ATCC 24843) (Fission yeast).